The following is a 185-amino-acid chain: NADH-quinone oxidoreductase subunit B (185 aa).

[4Fe-4S] cluster is bound by residues Cys37, Cys38, Cys103, and Cys132.

The protein belongs to the complex I 20 kDa subunit family. NDH-1 is composed of 14 different subunits. Subunits NuoB, C, D, E, F, and G constitute the peripheral sector of the complex. The cofactor is [4Fe-4S] cluster.

The protein localises to the cell membrane. The enzyme catalyses a quinone + NADH + 5 H(+)(in) = a quinol + NAD(+) + 4 H(+)(out). Functionally, NDH-1 shuttles electrons from NADH, via FMN and iron-sulfur (Fe-S) centers, to quinones in the respiratory chain. The immediate electron acceptor for the enzyme in this species is believed to be a menaquinone. Couples the redox reaction to proton translocation (for every two electrons transferred, four hydrogen ions are translocated across the cytoplasmic membrane), and thus conserves the redox energy in a proton gradient. The polypeptide is NADH-quinone oxidoreductase subunit B (Thermobifida fusca (strain YX)).